The sequence spans 385 residues: GPN-loop GTPase 1 (385 aa).

A GTP-binding site is contributed by 13-18 (GSGKTT). The Gly-Pro-Asn (GPN)-loop; involved in dimer interface signature appears at 70–72 (GPN). 173 to 176 (NKTD) is a GTP binding site. Residues serine 304, serine 308, and serine 313 each carry the phosphoserine modification. Positions 317–332 (EDANDGLVDRDEDEGV) are enriched in acidic residues. The segment at 317 to 356 (EDANDGLVDRDEDEGVEREYTFPGEERTKGEVNENSAPDL) is disordered. Residues 333-348 (EREYTFPGEERTKGEV) are compositionally biased toward basic and acidic residues. A Phosphoserine modification is found at serine 352. Lysine 369 participates in a covalent cross-link: Glycyl lysine isopeptide (Lys-Gly) (interchain with G-Cter in ubiquitin).

The protein belongs to the GPN-loop GTPase family. In terms of assembly, heterodimers with GPN2 or GPN3. Binds to RNA polymerase II (RNAPII) in a GTP-dependent manner. Interacts with nuclear pore protein NUP133 and nuclear export factor CRM1. Interacts with PCL1. In terms of processing, phosphorylated by the cyclin-CDK PCL1-PHO85.

The protein localises to the cytoplasm. Functionally, small GTPase required for proper nuclear import of RNA polymerase II (RNAPII). May act at an RNAP assembly step prior to nuclear import. Promotes sister chromatid separation during anaphase. This Saccharomyces cerevisiae (strain ATCC 204508 / S288c) (Baker's yeast) protein is GPN-loop GTPase 1.